Reading from the N-terminus, the 1254-residue chain is Protein transport protein Sec31A (1254 aa).

7 WD repeats span residues 4 to 47 (KEIN…EIFE), 64 to 111 (SSPH…AGDS), 120 to 160 (KHTG…SPMT), 166 to 206 (QPQE…LIIK), 209 to 254 (DHSN…SPLK), 258 to 298 (NHTR…VLYE), and 301 to 341 (TSTQ…NDNA). Low complexity predominate over residues 364 to 383 (TLPPLQLPQQTSPQSTITPL). Residues 364 to 386 (TLPPLQLPQQTSPQSTITPLKKP) form a disordered region. One copy of the WD 8; interaction with SEC13 repeat lies at 397-428 (SFAFGGKLVTLDNIKPTAQQPQQTAAHVVHIS). Disordered regions lie at residues 818–892 (PMQT…QSPA), 983–1008 (CFQH…GTQH), and 1058–1125 (PPAP…PGAP). The span at 832–846 (AQPAAPAVPPQYYQQ) shows a compositional bias: low complexity. Polar residues-rich tracts occupy residues 847 to 863 (GRSA…TPTA) and 872 to 881 (VPSSDPQGDS). Residues 1080-1091 (QTLQPQQQVPDQ) show a composition bias toward low complexity.

The protein belongs to the WD repeat SEC31 family. COPII is composed of at least 5 proteins: the SEC23/24 complex, the SEC13/31 complex and SAR1. SEC13 and SEC31 make a 2:2 tetramer that forms the edge element of the COPII outer coat. The tetramer self-assembles in multiple copies to form the complete polyhedral cage. Interacts (via WD 8) with SEC13.

Its subcellular location is the cytoplasm. It is found in the cytoplasmic vesicle. It localises to the COPII-coated vesicle membrane. The protein localises to the endoplasmic reticulum membrane. Functionally, component of the coat protein complex II (COPII) which promotes the formation of transport vesicles from the endoplasmic reticulum (ER). The coat has two main functions, the physical deformation of the endoplasmic reticulum membrane into vesicles and the selection of cargo molecules. In Danio rerio (Zebrafish), this protein is Protein transport protein Sec31A (sec31a).